We begin with the raw amino-acid sequence, 551 residues long: (6-4)DNA photolyase (551 aa).

A Photolyase/cryptochrome alpha/beta domain is found at 13-157; the sequence is AAAMVWFRKG…DVFSPVSHTL (145 aa). Glu254 serves as a coordination point for phosphate. FAD contacts are provided by residues Lys255, 268–272, 309–313, 372–375, Arg378, 407–409, and Asn413; these read TTVLS, QLLWR, WMHH, and DSD. Trp312 is a DNA binding site. An interaction with DNA region spans residues 374 to 379; sequence HHLARH. A DNA-binding site is contributed by Trp419. The tract at residues 508–551 is disordered; it reads YASNRLDDDKPDKGKSSNSSRRKLSAGSQVTPNSSKTKQLKRSS. Residues 512–522 show a composition bias toward basic and acidic residues; sequence RLDDDKPDKGK. A compositionally biased stretch (polar residues) spans 533–544; it reads AGSQVTPNSSKT.

This sequence belongs to the DNA photolyase class-1 family. Requires FAD as cofactor.

The catalysed reaction is (6-4) photoproduct (in DNA) = 2 pyrimidine residues (in DNA).. Functionally, involved in repair of UV radiation-induced DNA damage. Catalyzes the photoreactivation of pyrimidine [6-4] pyrimidone photoproduct (6-4 products). The sequence is that of (6-4)DNA photolyase (UVR3) from Oryza sativa subsp. japonica (Rice).